A 757-amino-acid chain; its full sequence is Chloride anion exchanger (757 aa).

Over 1–71 the chain is Cytoplasmic; that stretch reads MIEAIGNQYV…SWLPAYKIKE (71 aa). Residues 72–92 traverse the membrane as a helical segment; sequence WLLSDIVSGISTGLVAVLQGL. Alanine 93 is a topological domain (extracellular). A helical membrane pass occupies residues 94–114; that stretch reads FALLVNIPPAYGLYAAFFPVI. The Cytoplasmic portion of the chain corresponds to 115–124; the sequence is TYFFLGTSRH. Residues 125 to 145 traverse the membrane as a helical segment; the sequence is ISVGPFPVLSMMVGVVVTRVA. The Extracellular segment spans residues 146 to 176; that stretch reads SGSDTSPALSSSSAENDSMIEEKVMVAASVT. An N-linked (GlcNAc...) asparagine glycan is attached at asparagine 161. Residues 177–197 traverse the membrane as a helical segment; it reads VLSGIIQLLLGVLQIGFVVIY. Over 198 to 201 the chain is Cytoplasmic; sequence LSES. The chain crosses the membrane as a helical span at residues 202-222; sequence LISGFTTAAAIHVLVSQLKFM. Topologically, residues 223 to 250 are extracellular; sequence LQLTVPAHSDPFSIFKVLESVFSQIQKT. The helical transmembrane segment at 251–271 threads the bilayer; sequence NIADLVTSVIILVVVFVVKEI. Topologically, residues 272-278 are cytoplasmic; the sequence is NQRYRSK. A helical membrane pass occupies residues 279–299; sequence LPVPIPIELIMTVIATGISYG. Over 300-335 the chain is Extracellular; that stretch reads CNFEQRFGVAVVGNMSLGFQPPITPSVEVFQDTIGD. A helical transmembrane segment spans residues 336-356; that stretch reads CFGIAIVGFAVAFSVASVYSL. Over 357-367 the chain is Cytoplasmic; sequence KYDYPIDGNQE. The helical transmembrane segment at 368 to 388 threads the bilayer; the sequence is LIALGVSNIFTGAFKGFAGST. Residues 389 to 404 lie on the Extracellular side of the membrane; that stretch reads ALSRSGVQESTGGKTQ. Residues 405 to 425 form a helical membrane-spanning segment; it reads VAGLLSAVIVLIVIVAIGFLL. The Cytoplasmic portion of the chain corresponds to 426 to 462; it reads QPLQKSVLAALALGNLKGMLMQFAEIGRLWKKDKYDC. The helical transmembrane segment at 463–483 threads the bilayer; sequence LIWIMTFIFAIVLGLGLGLAA. At 484-757 the chain is on the extracellular side; sequence SVAFQLLTIV…ECQVPVETKF (274 aa). An STAS domain is found at 518–713; that stretch reads NYADVYEPEG…LTIHDAILHI (196 aa). Positions 754–757 match the PDZ-binding motif; sequence ETKF.

The protein belongs to the SLC26A/SulP transporter (TC 2.A.53) family. In terms of assembly, interacts with PDZK1, CFTR, SLC26A6 and NHERF1. Interacts (via PDZ-binding motif) with NHERF4 (via the third PDZ domain); interaction leads to decreased expression of SLC26A3 on the cell membrane resulting in its reduced exchanger activity. In terms of processing, N-glycosylation is required for efficient cell surface expression, and protection from proteolytic degradation.

The protein resides in the apical cell membrane. Its subcellular location is the membrane. It localises to the cell membrane. The catalysed reaction is hydrogencarbonate(in) + 2 chloride(out) = hydrogencarbonate(out) + 2 chloride(in). In terms of biological role, mediates chloride-bicarbonate exchange with a chloride bicarbonate stoichiometry of 2:1 in the intestinal epithelia. Plays a role in the chloride and bicarbonate homeostasis during sperm epididymal maturation and capacitation. The chain is Chloride anion exchanger (Slc26a3) from Rattus norvegicus (Rat).